Consider the following 180-residue polypeptide: Beta-lactoglobulin-1 (180 aa).

A signal peptide spans 1-18; it reads MKCLLLALGLALMCGIQA. Cystine bridges form between Cys84-Cys178 and Cys124-Cys137.

This sequence belongs to the calycin superfamily. Lipocalin family. Monomer.

The protein localises to the secreted. In terms of biological role, lactoglobulin is the primary component of whey, it binds retinol and is probably involved in the transport of that molecule. The sequence is that of Beta-lactoglobulin-1 (LGB1) from Equus caballus (Horse).